The sequence spans 151 residues: Non-specific lipid transfer protein GPI-anchored 30 (151 aa).

Residues 1 to 22 (MMMGMKFFSFYVVLLLVAASSG) form the signal peptide. Cystine bridges form between Cys-32–Cys-69, Cys-39–Cys-53, Cys-54–Cys-97, and Cys-67–Cys-106. Asn-44 carries N-linked (GlcNAc...) asparagine glycosylation. Ser-120 is lipidated: GPI-anchor amidated serine. The propeptide at 121–151 (SSIGNTFSQSYWMTTLAIAATVLSYCHHIIS) is removed in mature form.

The protein belongs to the plant LTP family. As to expression, expressed in vascular tissues of all organs. Expressed in seedlings, preferentially in hypocotyls and roots. Also observed in siliques.

It localises to the cell membrane. Its function is as follows. Lipid transfer protein that promotes the number of phloem (pro)cambial and pericycle cells. The protein is Non-specific lipid transfer protein GPI-anchored 30 of Arabidopsis thaliana (Mouse-ear cress).